The following is a 266-amino-acid chain: uncharacterized protein (266 aa).

It belongs to the ascovirus HvAV ORF59 family.

This is an uncharacterized protein from Trichoplusia ni ascovirus 2c (TnAV-2c).